The sequence spans 1020 residues: Valine--tRNA ligase (1020 aa).

A 'HIGH' region motif is present at residues 45 to 55; sequence PNVTGALHVGH. The 'KMSKS' region motif lies at 661 to 665; the sequence is KMSKT. An ATP-binding site is contributed by Lys-664. The stretch at 955–1020 forms a coiled coil; it reads AEKDRLEKAK…EALARLAELG (66 aa).

This sequence belongs to the class-I aminoacyl-tRNA synthetase family. ValS type 1 subfamily. Monomer.

The protein resides in the cytoplasm. It carries out the reaction tRNA(Val) + L-valine + ATP = L-valyl-tRNA(Val) + AMP + diphosphate. Catalyzes the attachment of valine to tRNA(Val). As ValRS can inadvertently accommodate and process structurally similar amino acids such as threonine, to avoid such errors, it has a 'posttransfer' editing activity that hydrolyzes mischarged Thr-tRNA(Val) in a tRNA-dependent manner. The sequence is that of Valine--tRNA ligase from Ruegeria pomeroyi (strain ATCC 700808 / DSM 15171 / DSS-3) (Silicibacter pomeroyi).